A 151-amino-acid chain; its full sequence is Deoxyuridine 5'-triphosphate nucleotidohydrolase (151 aa).

Residues 70–72, Asn-83, 87–89, and Met-97 contribute to the substrate site; these read RSG and LID.

The protein belongs to the dUTPase family. Requires Mg(2+) as cofactor.

The enzyme catalyses dUTP + H2O = dUMP + diphosphate + H(+). It functions in the pathway pyrimidine metabolism; dUMP biosynthesis; dUMP from dCTP (dUTP route): step 2/2. Functionally, this enzyme is involved in nucleotide metabolism: it produces dUMP, the immediate precursor of thymidine nucleotides and it decreases the intracellular concentration of dUTP so that uracil cannot be incorporated into DNA. The sequence is that of Deoxyuridine 5'-triphosphate nucleotidohydrolase from Tolumonas auensis (strain DSM 9187 / NBRC 110442 / TA 4).